Here is a 73-residue protein sequence, read N- to C-terminus: Large ribosomal subunit protein bL31 (73 aa).

Positions 16, 18, 36, and 39 each coordinate Zn(2+).

The protein belongs to the bacterial ribosomal protein bL31 family. Type A subfamily. Part of the 50S ribosomal subunit. Zn(2+) is required as a cofactor.

Binds the 23S rRNA. This Myxococcus xanthus (strain DK1622) protein is Large ribosomal subunit protein bL31.